We begin with the raw amino-acid sequence, 82 residues long: Cobrotoxin-b (82 aa).

An N-terminal signal peptide occupies residues 1–21; it reads MKTLLLTLLVVTIVCLDLGYT. 4 disulfides stabilise this stretch: Cys24–Cys44, Cys38–Cys61, Cys63–Cys74, and Cys75–Cys80.

The protein belongs to the three-finger toxin family. Short-chain subfamily. Type I alpha-neurotoxin sub-subfamily. As to expression, expressed by the venom gland.

Its subcellular location is the secreted. In terms of biological role, binds to muscle nicotinic acetylcholine receptor (nAChR) and inhibit acetylcholine from binding to the receptor, thereby impairing neuromuscular transmission. Produces peripheral paralysis by blocking neuromuscular transmission at the postsynaptic site. Has a lower toxicity than cobrotoxin. The protein is Cobrotoxin-b of Naja atra (Chinese cobra).